The following is a 653-amino-acid chain: Probable potassium transport system protein Kup (653 aa).

A run of 12 helical transmembrane segments spans residues 37–57 (ALLALGALGIVYGDIGTSPLY), 79–99 (VLSLIFWSLIIVVSVKYLLLV), 134–154 (ITLGIFGAALLYGDGIITPAI), 168–188 (AVFDPYVIPIALVILVALFLV), 196–216 (IGAVFGPVMCIWFLTLAGLGV), 243–263 (LHGFLVLGGVFLVVTGCEALY), 278–298 (WFSMVLPALMLNYLGQGALLL), 320–340 (LVALATVAGVIASQALIAGVF), 368–388 (IYLPGLNWALLVGVVALVLGF), 397–417 (AYGIAVSTAMVITTLMAYVVA), 426–446 (WVAIPVVGLFLSVELAFFGAN), and 450–470 (VADGGWFPLLMAVVVFTLMTT).

The protein belongs to the HAK/KUP transporter (TC 2.A.72) family.

The protein resides in the cell inner membrane. The catalysed reaction is K(+)(in) + H(+)(in) = K(+)(out) + H(+)(out). Transport of potassium into the cell. Likely operates as a K(+):H(+) symporter. The chain is Probable potassium transport system protein Kup from Myxococcus xanthus (strain DK1622).